Consider the following 194-residue polypeptide: NADH-quinone oxidoreductase subunit B (194 aa).

[4Fe-4S] cluster contacts are provided by Cys-72, Cys-73, Cys-137, and Cys-167.

This sequence belongs to the complex I 20 kDa subunit family. In terms of assembly, NDH-1 is composed of 14 different subunits. Subunits NuoB, C, D, E, F, and G constitute the peripheral sector of the complex. [4Fe-4S] cluster serves as cofactor.

It localises to the cell inner membrane. The catalysed reaction is a quinone + NADH + 5 H(+)(in) = a quinol + NAD(+) + 4 H(+)(out). Functionally, NDH-1 shuttles electrons from NADH, via FMN and iron-sulfur (Fe-S) centers, to quinones in the respiratory chain. Couples the redox reaction to proton translocation (for every two electrons transferred, four hydrogen ions are translocated across the cytoplasmic membrane), and thus conserves the redox energy in a proton gradient. The protein is NADH-quinone oxidoreductase subunit B of Granulibacter bethesdensis (strain ATCC BAA-1260 / CGDNIH1).